The following is a 560-amino-acid chain: Serine palmitoyltransferase 2 (560 aa).

Residues 65 to 85 form a helical membrane-spanning segment; sequence PMLVAVLTYVGYGVLTLFGYL. K377 carries the N6-(pyridoxal phosphate)lysine modification.

The protein belongs to the class-II pyridoxal-phosphate-dependent aminotransferase family. Component of the serine palmitoyltransferase (SPT) complex, which is composed of SPTLC1, SPTLC2 or SPTLC3 and SPTSSA or SPTSSB. The heterodimer consisting of SPTLC1 and SPTLC2/SPTLC3 forms the catalytic core of the enzyme, while SPTSSA or SPTSSB subunits determine substrate specificity. SPT also interacts with ORMDL proteins, especially ORMDL3, which negatively regulate SPT activity in the presence of ceramides. Forms dimers of heterodimers with SPTLC1. The cofactor is pyridoxal 5'-phosphate.

The protein localises to the endoplasmic reticulum membrane. The catalysed reaction is L-serine + hexadecanoyl-CoA + H(+) = 3-oxosphinganine + CO2 + CoA. It carries out the reaction octadecanoyl-CoA + L-serine + H(+) = 3-oxoeicosasphinganine + CO2 + CoA. It participates in lipid metabolism; sphingolipid metabolism. SPT complex catalytic activity is negatively regulated by ORMDL proteins, including ORMDL3, in the presence of ceramides. This mechanism allows to maintain ceramide levels at sufficient concentrations for the production of complex sphingolipids, but which prevents the accumulation of ceramides to levels that trigger apoptosis. Its function is as follows. Component of the serine palmitoyltransferase multisubunit enzyme (SPT) that catalyzes the initial and rate-limiting step in sphingolipid biosynthesis by condensing L-serine and activated acyl-CoA (most commonly palmitoyl-CoA) to form long-chain bases. The SPT complex is composed of SPTLC1, SPTLC2 or SPTLC3 and SPTSSA or SPTSSB. Within this complex, the heterodimer consisting of SPTLC1 and SPTLC2/SPTLC3 forms the catalytic core. The composition of the serine palmitoyltransferase (SPT) complex determines the substrate preference. The SPTLC1-SPTLC2-SPTSSA complex shows a strong preference for C16-CoA substrate, while the SPTLC1-SPTLC3-SPTSSA isozyme uses both C14-CoA and C16-CoA as substrates, with a slight preference for C14-CoA. The SPTLC1-SPTLC2-SPTSSB complex shows a strong preference for C18-CoA substrate, while the SPTLC1-SPTLC3-SPTSSB isozyme displays an ability to use a broader range of acyl-CoAs, without apparent preference. Crucial for adipogenesis. In Cricetulus griseus (Chinese hamster), this protein is Serine palmitoyltransferase 2 (SPTLC2).